A 57-amino-acid chain; its full sequence is Phylloseptin-Az4 (57 aa).

The N-terminal stretch at 1-13 (LVLFLGLVSLSIC) is a signal peptide. A propeptide spanning residues 14–35 (EEEKRETEEEENDQEEDDKSEE) is cleaved from the precursor. The tract at residues 16-35 (EKRETEEEENDQEEDDKSEE) is disordered. The segment covering 21–32 (EEEENDQEEDDK) has biased composition (acidic residues). The residue at position 56 (Leu56) is a Leucine amide.

Expressed by the skin glands.

The protein resides in the secreted. Its function is as follows. Has antibacterial activity against the Gram-positive bacterium M.luteus ATCC 49732 (MIC=1.3 uM). Does not inhibit the growth of the fungus C.albicans. The polypeptide is Phylloseptin-Az4 (psn12) (Pithecopus azureus (Orange-legged monkey tree frog)).